The sequence spans 197 residues: GTP cyclohydrolase-2 (197 aa).

50 to 54 (RIHSE) is a binding site for GTP. Zn(2+)-binding residues include Cys55, Cys66, and Cys68. Residues Gln71, 93 to 95 (EGR), and Thr115 contribute to the GTP site. Asp127 functions as the Proton acceptor in the catalytic mechanism. Arg129 serves as the catalytic Nucleophile. The GTP site is built by Thr150 and Lys155.

It belongs to the GTP cyclohydrolase II family. Zn(2+) is required as a cofactor.

The enzyme catalyses GTP + 4 H2O = 2,5-diamino-6-hydroxy-4-(5-phosphoribosylamino)-pyrimidine + formate + 2 phosphate + 3 H(+). Its pathway is cofactor biosynthesis; riboflavin biosynthesis; 5-amino-6-(D-ribitylamino)uracil from GTP: step 1/4. Its function is as follows. Catalyzes the conversion of GTP to 2,5-diamino-6-ribosylamino-4(3H)-pyrimidinone 5'-phosphate (DARP), formate and pyrophosphate. This Aeromonas hydrophila subsp. hydrophila (strain ATCC 7966 / DSM 30187 / BCRC 13018 / CCUG 14551 / JCM 1027 / KCTC 2358 / NCIMB 9240 / NCTC 8049) protein is GTP cyclohydrolase-2.